The chain runs to 431 residues: Peroxisomal biogenesis factor 3 (431 aa).

The Peroxisomal segment spans residues 1–10 (MDFFRRHQKK). A helical membrane pass occupies residues 11–28 (VLALVGVALSSYLFIDYV). The Cytoplasmic portion of the chain corresponds to 29–431 (KKKFFEIQGR…VVYSSFDWAL (403 aa)). The disordered stretch occupies residues 95–126 (TDRVLALESSTSSSATAQTVPTMTSGATEEGE). The span at 112–121 (QTVPTMTSGA) shows a compositional bias: polar residues.

This sequence belongs to the peroxin-3 family.

Its subcellular location is the peroxisome membrane. Involved in peroxisome biosynthesis. Seems to directly or indirectly sequesters components of the peroxisome biogenesis machinery. The chain is Peroxisomal biogenesis factor 3 (PEX3) from Yarrowia lipolytica (strain CLIB 122 / E 150) (Yeast).